Reading from the N-terminus, the 425-residue chain is Dihydroorotase (425 aa).

The Zn(2+) site is built by His59 and His61. Substrate contacts are provided by residues 61 to 63 (HLR) and Asn93. Residues Asp151, His178, and His231 each coordinate Zn(2+). Asn277 is a binding site for substrate. Asp304 provides a ligand contact to Zn(2+). Asp304 is an active-site residue. Substrate is bound by residues His308 and 322–323 (FG).

It belongs to the metallo-dependent hydrolases superfamily. DHOase family. Class I DHOase subfamily. Requires Zn(2+) as cofactor.

The catalysed reaction is (S)-dihydroorotate + H2O = N-carbamoyl-L-aspartate + H(+). Its pathway is pyrimidine metabolism; UMP biosynthesis via de novo pathway; (S)-dihydroorotate from bicarbonate: step 3/3. Functionally, catalyzes the reversible cyclization of carbamoyl aspartate to dihydroorotate. The protein is Dihydroorotase of Staphylococcus epidermidis (strain ATCC 35984 / DSM 28319 / BCRC 17069 / CCUG 31568 / BM 3577 / RP62A).